A 341-amino-acid polypeptide reads, in one-letter code: HTH-type transcriptional repressor PurR (341 aa).

One can recognise an HTH lacI-type domain in the interval 2 to 56 (ATIKDVAKRANVSTTTVSHVINKTRFVAEETRNAVWAAIKELHYSPSAVARSLKV). The segment at residues 4–23 (IKDVAKRANVSTTTVSHVIN) is a DNA-binding region (H-T-H motif). Residues 48 to 56 (SAVARSLKV) mediate DNA binding. Hypoxanthine-binding residues include Tyr-73, Arg-190, Thr-192, Phe-221, and Asp-275.

As to quaternary structure, homodimer.

It participates in purine metabolism; purine nucleotide biosynthesis [regulation]. Functionally, is the main repressor of the genes involved in the de novo synthesis of purine nucleotides, regulating purB, purC, purEK, purF, purHD, purL, purMN and guaBA expression. PurR is allosterically activated to bind its cognate DNA by binding the purine corepressors, hypoxanthine or guanine, thereby effecting transcription repression. This Escherichia fergusonii (strain ATCC 35469 / DSM 13698 / CCUG 18766 / IAM 14443 / JCM 21226 / LMG 7866 / NBRC 102419 / NCTC 12128 / CDC 0568-73) protein is HTH-type transcriptional repressor PurR.